The following is a 430-amino-acid chain: UDP-N-acetylglucosamine 1-carboxyvinyltransferase (430 aa).

22 to 23 (KN) contacts phosphoenolpyruvate. Residue R102 coordinates UDP-N-acetyl-alpha-D-glucosamine. C126 functions as the Proton donor in the catalytic mechanism. C126 bears the 2-(S-cysteinyl)pyruvic acid O-phosphothioketal mark. UDP-N-acetyl-alpha-D-glucosamine is bound by residues 131–135 (RPVDL), 172–175 (KVSV), D317, and I339.

Belongs to the EPSP synthase family. MurA subfamily.

The protein localises to the cytoplasm. It carries out the reaction phosphoenolpyruvate + UDP-N-acetyl-alpha-D-glucosamine = UDP-N-acetyl-3-O-(1-carboxyvinyl)-alpha-D-glucosamine + phosphate. The protein operates within cell wall biogenesis; peptidoglycan biosynthesis. Cell wall formation. Adds enolpyruvyl to UDP-N-acetylglucosamine. This is UDP-N-acetylglucosamine 1-carboxyvinyltransferase from Rhizobium meliloti (strain 1021) (Ensifer meliloti).